The sequence spans 84 residues: Alpha-like toxin BmK M1 (84 aa).

The signal sequence occupies residues 1-19 (MNYLVMISFALLLMTGVES). One can recognise an LCN-type CS-alpha/beta domain in the interval 21–83 (RDAYIAKPHN…VPIRVPGKCH (63 aa)). 4 disulfides stabilise this stretch: C31–C82, C35–C55, C41–C65, and C45–C67. R84 is a propeptide (removed by a carboxypeptidase).

This sequence belongs to the long (4 C-C) scorpion toxin superfamily. Sodium channel inhibitor family. Alpha subfamily. Expressed by the venom gland.

The protein resides in the secreted. Its function is as follows. Alpha toxins bind voltage-independently at site-3 of sodium channels (Nav) and inhibit the inactivation of the activated channels thereby blocking neuronal transmission. This toxin is active against both mammals and insects, and is classified as an alpha-like toxin. It is active on Nav1.2/SCN2A (EC(50)=139-252 nM), Nav1.3/SCN3A (EC(50)=565 nM), Nav1.4/SCN4A and Nav1.5/SCN5A (EC(50)=195-500 nM), Nav1.6/SCN8A (EC(50)=214 nM), and drosophila DmNav1 (EC(50)=30 nM). In mNav1.6/SCN8A, the toxin induces a large increase in both transient and persistent currents, which correlates with a prominent reduction in the fast component of inactivating current. In rNav1.2/SCN2A and rNav1.3/SCN3A, toxin-increased currents is much smaller. Moreover, the toxin only accelerates the slow inactivation development and delay recovery of mNav1.6/SCN8A through binding to the channel in the open state. Is 6-fold more toxic than BmK-M2. In vivo, intrahippocampal injection into rat induces epileptiform responses. In addition, intraplantar injection into rat induces spontaneous nociception and hyperalgesia. This chain is Alpha-like toxin BmK M1, found in Olivierus martensii (Manchurian scorpion).